The chain runs to 298 residues: Inosose dehydratase (298 aa).

This sequence belongs to the IolE/MocC family. The cofactor is glutathione. It depends on Co(2+) as a cofactor. Requires Mn(2+) as cofactor.

It catalyses the reaction scyllo-inosose = 3D-3,5/4-trihydroxycyclohexane-1,2-dione + H2O. Its pathway is polyol metabolism; myo-inositol degradation into acetyl-CoA; acetyl-CoA from myo-inositol: step 2/7. Its function is as follows. Catalyzes the dehydration of inosose (2-keto-myo-inositol, 2KMI or 2,4,6/3,5-pentahydroxycyclohexanone) to 3D-(3,5/4)-trihydroxycyclohexane-1,2-dione (D-2,3-diketo-4-deoxy-epi-inositol). The polypeptide is Inosose dehydratase (Bacillus velezensis (strain DSM 23117 / BGSC 10A6 / LMG 26770 / FZB42) (Bacillus amyloliquefaciens subsp. plantarum)).